We begin with the raw amino-acid sequence, 625 residues long: Grainyhead-like protein 2 homolog (625 aa).

Positions 1–93 are transcription activation; sequence MSQESDNNKR…KASDSQEDQD (93 aa). Disordered regions lie at residues 198–222 and 428–452; these read ASHS…SFKD and EERK…SSDG. The region spanning 244–482 is the Grh/CP2 DB domain; the sequence is GSGTFQYTLE…DLHSQPVLFI (239 aa). Residues 440–451 are compositionally biased toward polar residues; the sequence is QASQAQCNNSSD.

Belongs to the grh/CP2 family. Grainyhead subfamily. In terms of assembly, homodimer, also forms heterodimers with GRHL1 or GRHL3.

It localises to the nucleus. It is found in the membrane. Its function is as follows. Transcription factor playing an important role in primary neurulation and in epithelial development. Binds directly to the consensus DNA sequence 5'-AACCGGTT-3' acting as an activator and repressor on distinct target genes. During embryogenesis, plays unique and cooperative roles with GRHL3 in establishing distinct zones of primary neurulation. Essential for closure 3 (rostral end of the forebrain), functions cooperatively with GRHL3 in closure 2 (forebrain/midbrain boundary) and posterior neuropore closure. Regulates epithelial morphogenesis acting as a target gene-associated transcriptional activator of apical junctional complex components. Up-regulates of CLDN3 and CLDN4, as well as of RAB25, which increases the CLDN4 protein and its localization at tight junctions. Comprises an essential component of the transcriptional machinery that establishes appropriate expression levels of CLDN4 and CDH1 in different types of epithelia. Exhibits functional redundancy with GRHL3 in epidermal morphogenetic events such as eyelid fusion and epidermal wound repair. In lung, forms a regulatory loop with NKX2-1 that coordinates lung epithelial cell morphogenesis and differentiation. In keratinocytes, plays a role in telomerase activation during cellular proliferation, regulates TERT expression by binding to TERT promoter region and inhibiting DNA methylation at the 5'-CpG island, possibly by interfering with DNMT1 enzyme activity. In addition, impairs keratinocyte differentiation and epidermal function by inhibiting the expression of genes clustered at the epidermal differentiation complex (EDC) as well as GRHL1 and GRHL3 through epigenetic mechanisms. The chain is Grainyhead-like protein 2 homolog (Grhl2) from Mus musculus (Mouse).